We begin with the raw amino-acid sequence, 250 residues long: Biosynthetic peptidoglycan transglycosylase (250 aa).

The chain crosses the membrane as a helical span at residues 15–35 (AVLLFFVSSLGFVLLYRFVPV).

Belongs to the glycosyltransferase 51 family.

Its subcellular location is the cell inner membrane. The catalysed reaction is [GlcNAc-(1-&gt;4)-Mur2Ac(oyl-L-Ala-gamma-D-Glu-L-Lys-D-Ala-D-Ala)](n)-di-trans,octa-cis-undecaprenyl diphosphate + beta-D-GlcNAc-(1-&gt;4)-Mur2Ac(oyl-L-Ala-gamma-D-Glu-L-Lys-D-Ala-D-Ala)-di-trans,octa-cis-undecaprenyl diphosphate = [GlcNAc-(1-&gt;4)-Mur2Ac(oyl-L-Ala-gamma-D-Glu-L-Lys-D-Ala-D-Ala)](n+1)-di-trans,octa-cis-undecaprenyl diphosphate + di-trans,octa-cis-undecaprenyl diphosphate + H(+). It participates in cell wall biogenesis; peptidoglycan biosynthesis. Its function is as follows. Peptidoglycan polymerase that catalyzes glycan chain elongation from lipid-linked precursors. This chain is Biosynthetic peptidoglycan transglycosylase, found in Bdellovibrio bacteriovorus (strain ATCC 15356 / DSM 50701 / NCIMB 9529 / HD100).